Reading from the N-terminus, the 285-residue chain is 2,3,4,5-tetrahydropyridine-2,6-dicarboxylate N-succinyltransferase (285 aa).

Substrate contacts are provided by Arg111 and Asp148.

This sequence belongs to the transferase hexapeptide repeat family. Homotrimer.

The protein resides in the cytoplasm. The catalysed reaction is (S)-2,3,4,5-tetrahydrodipicolinate + succinyl-CoA + H2O = (S)-2-succinylamino-6-oxoheptanedioate + CoA. Its pathway is amino-acid biosynthesis; L-lysine biosynthesis via DAP pathway; LL-2,6-diaminopimelate from (S)-tetrahydrodipicolinate (succinylase route): step 1/3. This chain is 2,3,4,5-tetrahydropyridine-2,6-dicarboxylate N-succinyltransferase, found in Rhizobium rhizogenes (strain K84 / ATCC BAA-868) (Agrobacterium radiobacter).